The primary structure comprises 156 residues: ATP synthase subunit b (156 aa).

Residues 7-26 (FIGQMVAFAIFIYLTYRYVW) traverse the membrane as a helical segment.

Belongs to the ATPase B chain family. F-type ATPases have 2 components, F(1) - the catalytic core - and F(0) - the membrane proton channel. F(1) has five subunits: alpha(3), beta(3), gamma(1), delta(1), epsilon(1). F(0) has three main subunits: a(1), b(2) and c(10-14). The alpha and beta chains form an alternating ring which encloses part of the gamma chain. F(1) is attached to F(0) by a central stalk formed by the gamma and epsilon chains, while a peripheral stalk is formed by the delta and b chains.

The protein resides in the cell inner membrane. Functionally, f(1)F(0) ATP synthase produces ATP from ADP in the presence of a proton or sodium gradient. F-type ATPases consist of two structural domains, F(1) containing the extramembraneous catalytic core and F(0) containing the membrane proton channel, linked together by a central stalk and a peripheral stalk. During catalysis, ATP synthesis in the catalytic domain of F(1) is coupled via a rotary mechanism of the central stalk subunits to proton translocation. Its function is as follows. Component of the F(0) channel, it forms part of the peripheral stalk, linking F(1) to F(0). The protein is ATP synthase subunit b of Cellvibrio japonicus (strain Ueda107) (Pseudomonas fluorescens subsp. cellulosa).